Reading from the N-terminus, the 95-residue chain is Microcin E492 immunity protein (95 aa).

3 helical membrane-spanning segments follow: residues 1-21 (MTLLSFGFSPVFFSVMAFCII), 35-55 (VIVLILLTFFICFLYPLTKVY), and 67-87 (YLFCFISTLIAIAINVVILTI).

This sequence belongs to the MceB microcin immunity protein family.

The protein localises to the cell inner membrane. Protect the producing cell against microcin E492. This is Microcin E492 immunity protein from Klebsiella pneumoniae.